Here is a 361-residue protein sequence, read N- to C-terminus: Holliday junction branch migration complex subunit RuvB (361 aa).

The segment covering 1–12 (MNWDETGPETDE) has biased composition (acidic residues). The interval 1 to 21 (MNWDETGPETDEPTGPVLDDR) is disordered. A large ATPase domain (RuvB-L) region spans residues 13-199 (PTGPVLDDRL…FGFTGHMEFY (187 aa)). Residues leucine 38, arginine 39, glycine 80, lysine 83, threonine 84, threonine 85, 146–148 (EDF), arginine 189, tyrosine 199, and arginine 236 each bind ATP. Threonine 84 provides a ligand contact to Mg(2+). The small ATPAse domain (RuvB-S) stretch occupies residues 200–270 (APAELERVLH…IAMAALKVYE (71 aa)). The tract at residues 273 to 361 (ARGLDRLDRA…AKGQQGLFGA (89 aa)) is head domain (RuvB-H). DNA contacts are provided by arginine 309, arginine 328, and arginine 333.

The protein belongs to the RuvB family. As to quaternary structure, homohexamer. Forms an RuvA(8)-RuvB(12)-Holliday junction (HJ) complex. HJ DNA is sandwiched between 2 RuvA tetramers; dsDNA enters through RuvA and exits via RuvB. An RuvB hexamer assembles on each DNA strand where it exits the tetramer. Each RuvB hexamer is contacted by two RuvA subunits (via domain III) on 2 adjacent RuvB subunits; this complex drives branch migration. In the full resolvosome a probable DNA-RuvA(4)-RuvB(12)-RuvC(2) complex forms which resolves the HJ.

Its subcellular location is the cytoplasm. It catalyses the reaction ATP + H2O = ADP + phosphate + H(+). The RuvA-RuvB-RuvC complex processes Holliday junction (HJ) DNA during genetic recombination and DNA repair, while the RuvA-RuvB complex plays an important role in the rescue of blocked DNA replication forks via replication fork reversal (RFR). RuvA specifically binds to HJ cruciform DNA, conferring on it an open structure. The RuvB hexamer acts as an ATP-dependent pump, pulling dsDNA into and through the RuvAB complex. RuvB forms 2 homohexamers on either side of HJ DNA bound by 1 or 2 RuvA tetramers; 4 subunits per hexamer contact DNA at a time. Coordinated motions by a converter formed by DNA-disengaged RuvB subunits stimulates ATP hydrolysis and nucleotide exchange. Immobilization of the converter enables RuvB to convert the ATP-contained energy into a lever motion, pulling 2 nucleotides of DNA out of the RuvA tetramer per ATP hydrolyzed, thus driving DNA branch migration. The RuvB motors rotate together with the DNA substrate, which together with the progressing nucleotide cycle form the mechanistic basis for DNA recombination by continuous HJ branch migration. Branch migration allows RuvC to scan DNA until it finds its consensus sequence, where it cleaves and resolves cruciform DNA. This Streptomyces griseus subsp. griseus (strain JCM 4626 / CBS 651.72 / NBRC 13350 / KCC S-0626 / ISP 5235) protein is Holliday junction branch migration complex subunit RuvB.